The following is a 443-amino-acid chain: ATP-dependent protease ATPase subunit HslU (443 aa).

Residues Ile-18 and 60–65 (GVGKTE) contribute to the ATP site. The segment at 142–162 (LGFEASPSEESNATRQKFRKK) is disordered. ATP is bound by residues Asp-256, Glu-321, and Arg-393.

It belongs to the ClpX chaperone family. HslU subfamily. As to quaternary structure, a double ring-shaped homohexamer of HslV is capped on each side by a ring-shaped HslU homohexamer. The assembly of the HslU/HslV complex is dependent on binding of ATP.

It is found in the cytoplasm. ATPase subunit of a proteasome-like degradation complex; this subunit has chaperone activity. The binding of ATP and its subsequent hydrolysis by HslU are essential for unfolding of protein substrates subsequently hydrolyzed by HslV. HslU recognizes the N-terminal part of its protein substrates and unfolds these before they are guided to HslV for hydrolysis. The polypeptide is ATP-dependent protease ATPase subunit HslU (Nitrosomonas europaea (strain ATCC 19718 / CIP 103999 / KCTC 2705 / NBRC 14298)).